A 260-amino-acid polypeptide reads, in one-letter code: Hydroxyethylthiazole kinase 1 (260 aa).

Residue methionine 39 participates in substrate binding. Residues arginine 115 and threonine 160 each coordinate ATP. Substrate is bound at residue glycine 187.

Belongs to the Thz kinase family. Mg(2+) serves as cofactor.

The enzyme catalyses 5-(2-hydroxyethyl)-4-methylthiazole + ATP = 4-methyl-5-(2-phosphooxyethyl)-thiazole + ADP + H(+). Its pathway is cofactor biosynthesis; thiamine diphosphate biosynthesis; 4-methyl-5-(2-phosphoethyl)-thiazole from 5-(2-hydroxyethyl)-4-methylthiazole: step 1/1. In terms of biological role, catalyzes the phosphorylation of the hydroxyl group of 4-methyl-5-beta-hydroxyethylthiazole (THZ). This chain is Hydroxyethylthiazole kinase 1, found in Streptococcus pneumoniae (strain JJA).